The sequence spans 210 residues: DNA dC-&gt;dU-editing enzyme APOBEC-3H (210 aa).

The region spanning 4–126 (LTAKTFSLQF…PNYQEGLLLL (123 aa)) is the CMP/dCMP-type deaminase domain. His-54 contacts Zn(2+). Glu-56 functions as the Proton donor in the catalytic mechanism. Residues Cys-85 and Cys-88 each contribute to the Zn(2+) site. The tract at residues 182–210 (SRSVDVLENGLRSLQLGPVTPSSSIRNSR) is necessary and sufficient for localization to the cytoplasm.

This sequence belongs to the cytidine and deoxycytidylate deaminase family. As to quaternary structure, homodimer. The cofactor is Zn(2+).

It is found in the cytoplasm. It carries out the reaction a 2'-deoxycytidine in single-stranded DNA + H2O + H(+) = a 2'-deoxyuridine in single-stranded DNA + NH4(+). With respect to regulation, antiviral activity is neutralized by the simian immunodeficiency virus rhesus (SIV-mac) virion infectivity factor (VIF). In terms of biological role, DNA deaminase (cytidine deaminase) which acts as an inhibitor of retrovirus replication and retrotransposon mobility via deaminase-dependent and -independent mechanisms. Exhibits antiviral activity against vif-deficient HIV-1. After the penetration of retroviral nucleocapsids into target cells of infection and the initiation of reverse transcription, it can induce the conversion of cytosine to uracil in the minus-sense single-strand viral DNA, leading to G-to-A hypermutations in the subsequent plus-strand viral DNA. The resultant detrimental levels of mutations in the proviral genome, along with a deamination-independent mechanism that works prior to the proviral integration, together exert efficient antiretroviral effects in infected target cells. Selectively targets single-stranded DNA and does not deaminate double-stranded DNA or single- or double-stranded RNA. The protein is DNA dC-&gt;dU-editing enzyme APOBEC-3H of Macaca mulatta (Rhesus macaque).